Consider the following 287-residue polypeptide: 2-dehydro-3-deoxyphosphooctonate aldolase (287 aa).

It belongs to the KdsA family.

It localises to the cytoplasm. The catalysed reaction is D-arabinose 5-phosphate + phosphoenolpyruvate + H2O = 3-deoxy-alpha-D-manno-2-octulosonate-8-phosphate + phosphate. It participates in carbohydrate biosynthesis; 3-deoxy-D-manno-octulosonate biosynthesis; 3-deoxy-D-manno-octulosonate from D-ribulose 5-phosphate: step 2/3. Its pathway is bacterial outer membrane biogenesis; lipopolysaccharide biosynthesis. This is 2-dehydro-3-deoxyphosphooctonate aldolase from Rhodopseudomonas palustris (strain ATCC BAA-98 / CGA009).